Here is a 431-residue protein sequence, read N- to C-terminus: CinA-like protein (431 aa).

The protein belongs to the CinA family.

In Chlorobium luteolum (strain DSM 273 / BCRC 81028 / 2530) (Pelodictyon luteolum), this protein is CinA-like protein.